The sequence spans 1068 residues: Self-sufficient cytochrome P450 monooxygenase CYP505U2 (1068 aa).

Residue Cys-408 participates in heme binding. The disordered stretch occupies residues Thr-464 to Gly-498. The span at Ser-472 to Gly-498 shows a compositional bias: polar residues. In terms of domain architecture, Flavodoxin-like spans Val-505 to Leu-646. FMN is bound by residues Ser-511–Ser-515 and Val-590–Ala-622. The region spanning Lys-679–Pro-909 is the FAD-binding FR-type domain.

The protein in the N-terminal section; belongs to the cytochrome P450 family. It depends on FAD as a cofactor. Requires FMN as cofactor. Heme serves as cofactor.

The catalysed reaction is 2 oxidized [cytochrome P450] + NADPH = 2 reduced [cytochrome P450] + NADP(+) + H(+). It catalyses the reaction an organic molecule + reduced [NADPH--hemoprotein reductase] + O2 = an alcohol + oxidized [NADPH--hemoprotein reductase] + H2O + H(+). The enzyme catalyses dodecanoate + reduced [NADPH--hemoprotein reductase] + O2 = 3-hydroxydodecanoate + oxidized [NADPH--hemoprotein reductase] + H2O + H(+). It carries out the reaction dodecanoate + reduced [NADPH--hemoprotein reductase] + O2 = 7-hydroxydodecanoate + oxidized [NADPH--hemoprotein reductase] + H2O + H(+). The catalysed reaction is dodecan-1-ol + reduced [NADPH--hemoprotein reductase] + O2 = 1,4-dodecanediol + oxidized [NADPH--hemoprotein reductase] + H2O + H(+). It catalyses the reaction dodecan-1-ol + reduced [NADPH--hemoprotein reductase] + O2 = 1,3-dodecanediol + oxidized [NADPH--hemoprotein reductase] + H2O + H(+). Self-sufficient cytochrome P450 monooxygenase that catalyzes the regioselective in-chain hydroxylation of alkanes, fatty alcohols, and fatty acids. Preferentially hydroxylates 1-dodecanol at C3 and C4 (positions omega-8 and omega-9). It is very likely that CYP505U2 prefers dodecanol, and probably other fatty alcohols, over fatty acids as substrates. Does not show any significant activity toward tetradecanoic acid. This is Self-sufficient cytochrome P450 monooxygenase CYP505U2 from Exserohilum turcicum (strain 28A) (Northern leaf blight fungus).